A 289-amino-acid chain; its full sequence is Kinetochore-associated protein MTW1 (289 aa).

A coiled-coil region spans residues R105–R147.

It belongs to the mis12 family. As to quaternary structure, component of the MIND kinetochore complex, which is composed of at least MTW1, NNF1, NSL1 and DSN1.

Its subcellular location is the chromosome. The protein localises to the centromere. It localises to the kinetochore. It is found in the cytoplasm. The protein resides in the cytoskeleton. Its subcellular location is the spindle pole. Functionally, acts as an essential component of the kinetochore MIND complex, which is required for the spindle checkpoint and kinetochore integrity. MIND plays a role in establishing a bipolar spindle-kinetochore interaction by joining kinetochore subunits contacting DNA to those contacting microtubules. The chain is Kinetochore-associated protein MTW1 (MTW1) from Saccharomyces cerevisiae (strain ATCC 204508 / S288c) (Baker's yeast).